The chain runs to 429 residues: Histidine--tRNA ligase (429 aa).

Belongs to the class-II aminoacyl-tRNA synthetase family. In terms of assembly, homodimer.

Its subcellular location is the cytoplasm. The enzyme catalyses tRNA(His) + L-histidine + ATP = L-histidyl-tRNA(His) + AMP + diphosphate + H(+). The sequence is that of Histidine--tRNA ligase from Streptococcus pneumoniae serotype 4 (strain ATCC BAA-334 / TIGR4).